The following is a 231-amino-acid chain: A-type ATP synthase subunit D (231 aa).

The protein belongs to the V-ATPase D subunit family. As to quaternary structure, has multiple subunits with at least A(3), B(3), C, D, E, F, H, I and proteolipid K(x).

Its subcellular location is the cell membrane. Functionally, component of the A-type ATP synthase that produces ATP from ADP in the presence of a proton gradient across the membrane. The sequence is that of A-type ATP synthase subunit D from Methanobrevibacter smithii (strain ATCC 35061 / DSM 861 / OCM 144 / PS).